A 102-amino-acid polypeptide reads, in one-letter code: Acid shock protein (102 aa).

Residues 1-21 (MKKVLALVVAAAMGLSSAAFA) form the signal peptide. Residues 21 to 41 (AAETTTTPAPTATTTKAAPAK) show a composition bias toward low complexity. The interval 21-102 (AAETTTTPAP…PAKPAAQPAA (82 aa)) is disordered. Positions 22–58 (AETTTTPAPTATTTKAAPAKTTHHKKQHKAAPAQKAQ) are excised as a propeptide. The span at 80–90 (AAKKHAKKHSH) shows a compositional bias: basic residues. Residues 91 to 102 (QQPAKPAAQPAA) are compositionally biased toward low complexity.

The protein belongs to the Asr family. Post-translationally, proteolytic processing gives rise to the active protein.

The protein resides in the periplasm. Its function is as follows. Required for growth and/or survival at acidic conditions. This is Acid shock protein from Escherichia coli (strain K12 / MC4100 / BW2952).